Consider the following 359-residue polypeptide: Phosphoserine aminotransferase (359 aa).

R41 is an L-glutamate binding site. Residues 75 to 76 (AS), W101, T152, D171, and Q194 each bind pyridoxal 5'-phosphate. Position 195 is an N6-(pyridoxal phosphate)lysine (K195). 236-237 (NT) serves as a coordination point for pyridoxal 5'-phosphate.

Belongs to the class-V pyridoxal-phosphate-dependent aminotransferase family. SerC subfamily. As to quaternary structure, homodimer. It depends on pyridoxal 5'-phosphate as a cofactor.

The protein localises to the cytoplasm. The catalysed reaction is O-phospho-L-serine + 2-oxoglutarate = 3-phosphooxypyruvate + L-glutamate. It catalyses the reaction 4-(phosphooxy)-L-threonine + 2-oxoglutarate = (R)-3-hydroxy-2-oxo-4-phosphooxybutanoate + L-glutamate. The protein operates within amino-acid biosynthesis; L-serine biosynthesis; L-serine from 3-phospho-D-glycerate: step 2/3. It participates in cofactor biosynthesis; pyridoxine 5'-phosphate biosynthesis; pyridoxine 5'-phosphate from D-erythrose 4-phosphate: step 3/5. Its function is as follows. Catalyzes the reversible conversion of 3-phosphohydroxypyruvate to phosphoserine and of 3-hydroxy-2-oxo-4-phosphonooxybutanoate to phosphohydroxythreonine. In Acinetobacter baumannii (strain AB307-0294), this protein is Phosphoserine aminotransferase.